A 386-amino-acid chain; its full sequence is AT-hook motif nuclear-localized protein 8 (386 aa).

Disordered stretches follow at residues 1 to 175 (MDSR…LGGT) and 303 to 372 (KQSS…LHPH). Residues 54–70 (QQQSQTFHQQQQQQMDQ) show a composition bias toward low complexity. Residues 101–110 (VKKKRGRPRK) show a composition bias toward basic residues. A Bipartite nuclear localization signal motif is present at residues 102-110 (KKKRGRPRK). The a.T hook 1 DNA-binding region spans 102–114 (KKKRGRPRKYTPD). Residues 126-135 (PLLSAASNSY) are compositionally biased toward polar residues. Positions 136 to 147 (GEGGVGDSGGNG) are enriched in gly residues. A DNA-binding region (a.T hook 2) is located at residues 155–167 (KRNRGRPPGSSKK). Residues 174-316 (GTSGVGFTPH…VNIARGQNPE (143 aa)) enclose the PPC domain. Composition is skewed to low complexity over residues 328-337 (GSVSQGPSSE) and 361-372 (QQQQQQQPLHPH).

It localises to the nucleus. In terms of biological role, transcription factor that specifically binds AT-rich DNA sequences related to the nuclear matrix attachment regions (MARs). This Arabidopsis thaliana (Mouse-ear cress) protein is AT-hook motif nuclear-localized protein 8.